The primary structure comprises 215 residues: Adenylate kinase (215 aa).

An ATP-binding site is contributed by 10–15; that stretch reads GAGKGT. The segment at 30-59 is NMP; the sequence is STGDIFRKNIKEKTELGQKVEGLLAQGKLV. Residues threonine 31, arginine 36, 57-59, 85-88, and glutamine 92 contribute to the AMP site; these read KLV and GFPR. Positions 126–163 are LID; that stretch reads GRRVCPSCGASYHIDNNPTKVDGICDACQTPVIQREDD. Arginine 127 is a binding site for ATP. 2 residues coordinate Zn(2+): cysteine 130 and cysteine 133. Residue 136–137 participates in ATP binding; that stretch reads SY. Positions 150 and 153 each coordinate Zn(2+). The AMP site is built by arginine 160 and arginine 171. Leucine 199 contacts ATP.

The protein belongs to the adenylate kinase family. In terms of assembly, monomer.

Its subcellular location is the cytoplasm. The enzyme catalyses AMP + ATP = 2 ADP. Its pathway is purine metabolism; AMP biosynthesis via salvage pathway; AMP from ADP: step 1/1. Catalyzes the reversible transfer of the terminal phosphate group between ATP and AMP. Plays an important role in cellular energy homeostasis and in adenine nucleotide metabolism. This chain is Adenylate kinase, found in Finegoldia magna (strain ATCC 29328 / DSM 20472 / WAL 2508) (Peptostreptococcus magnus).